The chain runs to 259 residues: S-methyl-5'-thioadenosine phosphorylase (259 aa).

Phosphate is bound by residues serine 9 and 50-51 (RH). Methionine 175 contributes to the substrate binding site. Threonine 176 contributes to the phosphate binding site. Position 199-201 (199-201 (DLD)) interacts with substrate.

Belongs to the PNP/MTAP phosphorylase family. MTAP subfamily. In terms of assembly, homohexamer. Dimer of a homotrimer.

It carries out the reaction S-methyl-5'-thioadenosine + phosphate = 5-(methylsulfanyl)-alpha-D-ribose 1-phosphate + adenine. The protein operates within amino-acid biosynthesis; L-methionine biosynthesis via salvage pathway; S-methyl-5-thio-alpha-D-ribose 1-phosphate from S-methyl-5'-thioadenosine (phosphorylase route): step 1/1. Catalyzes the reversible phosphorylation of S-methyl-5'-thioadenosine (MTA) to adenine and 5-methylthioribose-1-phosphate. Involved in the breakdown of MTA, a major by-product of polyamine biosynthesis. Responsible for the first step in the methionine salvage pathway after MTA has been generated from S-adenosylmethionine. Has broad substrate specificity with 6-aminopurine nucleosides as preferred substrates. This Mycolicibacterium smegmatis (strain ATCC 700084 / mc(2)155) (Mycobacterium smegmatis) protein is S-methyl-5'-thioadenosine phosphorylase.